Here is a 440-residue protein sequence, read N- to C-terminus: Beta-1,3-galactosyl-O-glycosyl-glycoprotein beta-1,6-N-acetylglucosaminyltransferase 3 (440 aa).

At 1–12 the chain is on the cytoplasmic side; sequence MKMTGWKKKLCR. A helical; Signal-anchor for type II membrane protein membrane pass occupies residues 13 to 30; it reads GHHLWALGCYMLLAVVAL. Residues 31–440 lie on the Lumenal side of the membrane; the sequence is RLSLRLKCDV…RHKAIYGTEL (410 aa). Cystine bridges form between Cys-73–Cys-230, Cys-164–Cys-384, Cys-185–Cys-212, and Cys-393–Cys-425. N-linked (GlcNAc...) asparagine glycosylation occurs at Asn-108.

Belongs to the glycosyltransferase 14 family. In terms of processing, N-glycosylated.

Its subcellular location is the golgi apparatus membrane. The catalysed reaction is a 3-O-[beta-D-galactosyl-(1-&gt;3)-N-acetyl-alpha-D-galactosaminyl]-L-seryl-[protein] + UDP-N-acetyl-alpha-D-glucosamine = 3-O-{beta-D-galactosyl-(1-&gt;3)-[N-acetyl-beta-D-glucosaminyl-(1-&gt;6)]-N-acetyl-alpha-D-galactosaminyl}-L-seryl-[protein] + UDP + H(+). It catalyses the reaction a 3-O-[beta-D-galactosyl-(1-&gt;3)-N-acetyl-alpha-D-galactosaminyl]-L-threonyl-[protein] + UDP-N-acetyl-alpha-D-glucosamine = a 3-O-{beta-D-galactosyl-(1-&gt;3)-[N-acetyl-beta-D-glucosaminyl-(1-&gt;6)]-N-acetyl-alpha-D-galactosaminyl}-L-threonyl-[protein] + UDP + H(+). It carries out the reaction a beta-D-Gal-(1-&gt;4)-beta-D-GlcNAc-(1-&gt;3)-beta-D-Gal-(1-&gt;4)-beta-D-GlcNAc derivative + UDP-N-acetyl-alpha-D-glucosamine = a beta-D-Gal-(1-&gt;4)-beta-D-GlcNAc-(1-&gt;3)-[beta-D-GlcNAc-(1-&gt;6)]-beta-D-Gal-(1-&gt;4)-N-acetyl-beta-D-glucosaminyl derivative + UDP + H(+). The enzyme catalyses 3-O-[N-acetyl-beta-D-glucosaminyl-(1-&gt;3)-N-acetyl-alpha-D-galactosaminyl]-L-seryl-[protein] + UDP-N-acetyl-alpha-D-glucosamine = 3-O-[N-acetyl-beta-D-glucosaminyl-(1-&gt;3)-[N-acetyl-beta-D-glucosaminyl-(1-&gt;6)]-N-acetyl-alpha-D-galactosaminyl]-L-seryl-[protein] + UDP + H(+). The catalysed reaction is a 3-O-[N-acetyl-beta-D-glucosaminyl-(1-&gt;3)-N-acetyl-alpha-D-galactosaminyl]-L-threonyl-[protein] + UDP-N-acetyl-alpha-D-glucosamine = 3-O-[N-acetyl-beta-D-glucosaminyl-(1-&gt;3)-[N-acetyl-beta-D-glucosaminyl-(1-&gt;6)]-N-acetyl-alpha-D-galactosaminyl]-L-threonyl-[protein] + UDP + H(+). It functions in the pathway protein modification; protein glycosylation. In terms of biological role, glycosyltransferase that can synthesize all known mucin beta 6 N-acetylglucosaminides. Mediates core 2 and core 4 O-glycan branching, 2 important steps in mucin-type biosynthesis. Also has I-branching enzyme activity by converting linear into branched poly-N-acetyllactosaminoglycans, leading to introduce the blood group I antigen during embryonic development. In Ovis aries (Sheep), this protein is Beta-1,3-galactosyl-O-glycosyl-glycoprotein beta-1,6-N-acetylglucosaminyltransferase 3 (GCNT3).